The primary structure comprises 250 residues: Triosephosphate isomerase (250 aa).

9-11 lines the substrate pocket; sequence NWK. Histidine 96 functions as the Electrophile in the catalytic mechanism. Glutamate 168 functions as the Proton acceptor in the catalytic mechanism. Residues glycine 174, serine 216, and 237–238 each bind substrate; that span reads GG.

This sequence belongs to the triosephosphate isomerase family. In terms of assembly, homodimer.

The protein localises to the cytoplasm. The catalysed reaction is D-glyceraldehyde 3-phosphate = dihydroxyacetone phosphate. It functions in the pathway carbohydrate biosynthesis; gluconeogenesis. Its pathway is carbohydrate degradation; glycolysis; D-glyceraldehyde 3-phosphate from glycerone phosphate: step 1/1. Its function is as follows. Involved in the gluconeogenesis. Catalyzes stereospecifically the conversion of dihydroxyacetone phosphate (DHAP) to D-glyceraldehyde-3-phosphate (G3P). The polypeptide is Triosephosphate isomerase (Leptospira borgpetersenii serovar Hardjo-bovis (strain JB197)).